The chain runs to 484 residues: Glutamate--tRNA ligase (484 aa).

The short motif at 9-19 is the 'HIGH' region element; the sequence is PSPTGNLHIGT. Zn(2+) contacts are provided by Cys98, Cys100, His125, and His127. Positions 250–254 match the 'KMSKS' region motif; it reads KLSKR. Lys253 provides a ligand contact to ATP.

Belongs to the class-I aminoacyl-tRNA synthetase family. Glutamate--tRNA ligase type 1 subfamily. In terms of assembly, monomer. Zn(2+) is required as a cofactor.

It is found in the cytoplasm. It carries out the reaction tRNA(Glu) + L-glutamate + ATP = L-glutamyl-tRNA(Glu) + AMP + diphosphate. Functionally, catalyzes the attachment of glutamate to tRNA(Glu) in a two-step reaction: glutamate is first activated by ATP to form Glu-AMP and then transferred to the acceptor end of tRNA(Glu). The chain is Glutamate--tRNA ligase from Crocosphaera subtropica (strain ATCC 51142 / BH68) (Cyanothece sp. (strain ATCC 51142)).